Here is a 158-residue protein sequence, read N- to C-terminus: Protein hunchback (158 aa).

A compositionally biased stretch (basic residues) spans 18-34 (HNHHHHHHHGHHQHQQR). 2 disordered regions span residues 18–96 (HNHH…TTTA) and 118–158 (LTPP…KYMA). Residues 41–50 (ASSPHQSPLP) are compositionally biased toward polar residues. Residues 52-65 (LQLEQYLKQQQQQP) show a composition bias toward low complexity. Over residues 139 to 158 (EPEKEHDLMSNSSEDMKYMA) the composition is skewed to basic and acidic residues.

This sequence belongs to the hunchback C2H2-type zinc-finger protein family.

The protein localises to the nucleus. Functionally, gap class segmentation protein that controls development of head structures. This Drosophila mimica (Fruit fly) protein is Protein hunchback (hb).